The primary structure comprises 247 residues: MFISTNEKSEIKYSRVLFKISGEALMGSKQFGHDMEAIGELSKGIVEVCNLGVQVCIVVGGGNIFRGTSASLSGCERASSDYIGMLATIINALILQNFLEKNLVASRVLSAIPMATVCEPYIRRKAIRHLEKGRVVIFAAGTGNPFFTTDTAAALRAVEMNCDVILKGTQVNGVYSADPKKNEDAVMYDRLSYTDLLTRDLKVMDASAISLARENSIPIIVFSLKGEKIVNIIKGQGTYTIVSDCKQ.

ATP is bound at residue K19–G22. UMP is bound at residue G61. ATP contacts are provided by G62 and R66. Residues D81 and T142–T149 contribute to the UMP site. ATP-binding residues include T169, Q170, Y175, and D178.

Belongs to the UMP kinase family. In terms of assembly, homohexamer.

The protein resides in the cytoplasm. The catalysed reaction is UMP + ATP = UDP + ADP. The protein operates within pyrimidine metabolism; CTP biosynthesis via de novo pathway; UDP from UMP (UMPK route): step 1/1. Its activity is regulated as follows. Inhibited by UTP. In terms of biological role, catalyzes the reversible phosphorylation of UMP to UDP. The sequence is that of Uridylate kinase from Wolbachia pipientis wMel.